The following is a 408-amino-acid chain: Succinylornithine transaminase (408 aa).

Lysine 252 bears the N6-(pyridoxal phosphate)lysine mark.

The protein belongs to the class-III pyridoxal-phosphate-dependent aminotransferase family. AstC subfamily. It depends on pyridoxal 5'-phosphate as a cofactor.

It carries out the reaction N(2)-succinyl-L-ornithine + 2-oxoglutarate = N-succinyl-L-glutamate 5-semialdehyde + L-glutamate. The protein operates within amino-acid degradation; L-arginine degradation via AST pathway; L-glutamate and succinate from L-arginine: step 3/5. Catalyzes the transamination of N(2)-succinylornithine and alpha-ketoglutarate into N(2)-succinylglutamate semialdehyde and glutamate. Can also act as an acetylornithine aminotransferase. This Salmonella newport (strain SL254) protein is Succinylornithine transaminase.